We begin with the raw amino-acid sequence, 476 residues long: Rho GTPase-activating protein 68F (476 aa).

Disordered stretches follow at residues 1–35 and 241–266; these read MDAH…DLHD and DKLN…QQQH. Phosphoserine occurs at positions 29 and 31. The region spanning 91 to 244 is the CRAL-TRIO domain; it reads SENFQTPRNK…NICDLDDKLN (154 aa). Thr-251 is modified (phosphothreonine). A compositionally biased stretch (polar residues) spans 257–266; it reads NINASRQQQH. The Rho-GAP domain maps to 276-464; that stretch reads VPLKFIVMNS…FVLQNHKDIY (189 aa).

Its function is as follows. Functions as a GTPase-activating protein (GAP) for RhoA/Rho1 during gastrulation by converting it to an inactive GDP-bound state. In Drosophila melanogaster (Fruit fly), this protein is Rho GTPase-activating protein 68F (RhoGAP68F).